The primary structure comprises 312 residues: tRNA dimethylallyltransferase (312 aa).

11 to 18 contacts ATP; that stretch reads GPTAAGKS. Substrate is bound at residue 13 to 18; it reads TAAGKS. 3 interaction with substrate tRNA regions span residues 36–39, 160–164, and 243–248; these read DSAT, QRIQR, and RCVGYR.

Belongs to the IPP transferase family. In terms of assembly, monomer. Requires Mg(2+) as cofactor.

It catalyses the reaction adenosine(37) in tRNA + dimethylallyl diphosphate = N(6)-dimethylallyladenosine(37) in tRNA + diphosphate. Functionally, catalyzes the transfer of a dimethylallyl group onto the adenine at position 37 in tRNAs that read codons beginning with uridine, leading to the formation of N6-(dimethylallyl)adenosine (i(6)A). The sequence is that of tRNA dimethylallyltransferase from Bordetella avium (strain 197N).